We begin with the raw amino-acid sequence, 428 residues long: D-amino acid dehydrogenase (428 aa).

Residue 3–17 (VVILGSGVVGVASAY) coordinates FAD.

The protein belongs to the DadA oxidoreductase family. The cofactor is FAD.

It carries out the reaction a D-alpha-amino acid + A + H2O = a 2-oxocarboxylate + AH2 + NH4(+). Its pathway is amino-acid degradation; D-alanine degradation; NH(3) and pyruvate from D-alanine: step 1/1. In terms of biological role, oxidative deamination of D-amino acids. This Burkholderia lata (strain ATCC 17760 / DSM 23089 / LMG 22485 / NCIMB 9086 / R18194 / 383) protein is D-amino acid dehydrogenase.